The sequence spans 506 residues: Thyroid hormone receptor alpha (506 aa).

Residues 1–32 (MEQKPSKVECGSDPEENSARSPDGKRKRKNGQ) form a disordered region. Residues 1–52 (MEQKPSKVECGSDPEENSARSPDGKRKRKNGQCSLKTSMSGYIPSYLDKDEQ) form a modulating region. 8 residues coordinate Zn(2+): C53, C56, C70, C73, C91, C97, C107, and C110. 2 consecutive NR C4-type zinc fingers follow at residues 53 to 73 (CVVCGDKATGYHYRCITCEGC) and 91 to 115 (CKYDSCCVIDKITRNQCQLCRFKKC). Positions 53 to 127 (CVVCGDKATG…VGMAMDLVLD (75 aa)) form a DNA-binding region, nuclear receptor. Residues 163–407 (EEWDLIHVAT…EGQQLLGMHV (245 aa)) form the NR LBD domain. 3,3',5-triiodo-L-thyronine contacts are provided by R228 and S277. Residues 460–506 (GEDDSSEAGSLTSSDEDPEVCEDAAQATQPLPEAPPRADGEGGGGGS) form a disordered region.

This sequence belongs to the nuclear hormone receptor family. NR1 subfamily. Binds DNA as a dimer; homodimer and heterodimer with RXRB. Interacts with NCOA3 and NCOA6 coactivators, leading to a strong increase of transcription of target genes. Probably interacts with SFPQ. Interacts with C1D. Interacts with AKAP13. Interacts with TP53INP2. Interacts with PER2. Interacts with PER2. Isoform alpha-2 and isoform alpha-1 interact with TACC1, but the interaction with alpha-1 is weaker. The interaction with isoform alpha-1, but not alpha-2, is decreased in the presence of thyroid hormone T3.

The protein resides in the nucleus. It localises to the cytoplasm. Nuclear hormone receptor that can act as a repressor or activator of transcription. High affinity receptor for thyroid hormones, including triiodothyronine and thyroxine. The polypeptide is Thyroid hormone receptor alpha (THRA) (Sus scrofa (Pig)).